The following is a 429-amino-acid chain: 3-phosphoshikimate 1-carboxyvinyltransferase (429 aa).

3-phosphoshikimate contacts are provided by lysine 11, serine 12, and arginine 16. Residue lysine 11 coordinates phosphoenolpyruvate. Phosphoenolpyruvate is bound by residues glycine 82 and arginine 110. 3-phosphoshikimate contacts are provided by serine 155, glutamine 157, aspartate 302, and lysine 329. Phosphoenolpyruvate is bound at residue glutamine 157. The Proton acceptor role is filled by aspartate 302. Arginine 333 and arginine 385 together coordinate phosphoenolpyruvate.

It belongs to the EPSP synthase family. As to quaternary structure, monomer.

The protein localises to the cytoplasm. The catalysed reaction is 3-phosphoshikimate + phosphoenolpyruvate = 5-O-(1-carboxyvinyl)-3-phosphoshikimate + phosphate. Its pathway is metabolic intermediate biosynthesis; chorismate biosynthesis; chorismate from D-erythrose 4-phosphate and phosphoenolpyruvate: step 6/7. Functionally, catalyzes the transfer of the enolpyruvyl moiety of phosphoenolpyruvate (PEP) to the 5-hydroxyl of shikimate-3-phosphate (S3P) to produce enolpyruvyl shikimate-3-phosphate and inorganic phosphate. In Helicobacter pylori (strain HPAG1), this protein is 3-phosphoshikimate 1-carboxyvinyltransferase.